A 223-amino-acid polypeptide reads, in one-letter code: Large ribosomal subunit protein uL4c (223 aa).

A disordered region spans residues 61–96; the sequence is TKTRSEVEGGGKKPWKQKGTGNARAGSSNSPLWKGG.

This sequence belongs to the universal ribosomal protein uL4 family. In terms of assembly, part of the 50S ribosomal subunit.

It localises to the plastid. The protein resides in the chloroplast. Functionally, probably binds the 23S rRNA. This chain is Large ribosomal subunit protein uL4c (rpl4), found in Guillardia theta (Cryptophyte).